A 628-amino-acid polypeptide reads, in one-letter code: 1-deoxy-D-xylulose-5-phosphate synthase (628 aa).

Thiamine diphosphate is bound by residues histidine 77 and 118–120 (GHS). Position 150 (aspartate 150) interacts with Mg(2+). Thiamine diphosphate is bound by residues 151–152 (GA), asparagine 180, tyrosine 288, and glutamate 369. Asparagine 180 contributes to the Mg(2+) binding site.

The protein belongs to the transketolase family. DXPS subfamily. In terms of assembly, homodimer. It depends on Mg(2+) as a cofactor. Requires thiamine diphosphate as cofactor.

It catalyses the reaction D-glyceraldehyde 3-phosphate + pyruvate + H(+) = 1-deoxy-D-xylulose 5-phosphate + CO2. Its pathway is metabolic intermediate biosynthesis; 1-deoxy-D-xylulose 5-phosphate biosynthesis; 1-deoxy-D-xylulose 5-phosphate from D-glyceraldehyde 3-phosphate and pyruvate: step 1/1. Its function is as follows. Catalyzes the acyloin condensation reaction between C atoms 2 and 3 of pyruvate and glyceraldehyde 3-phosphate to yield 1-deoxy-D-xylulose-5-phosphate (DXP). This chain is 1-deoxy-D-xylulose-5-phosphate synthase, found in Aquifex aeolicus (strain VF5).